The primary structure comprises 173 residues: Putative metal-dependent hydrolase BT9727_2476 (173 aa).

Positions 65, 156, and 160 each coordinate Zn(2+).

It belongs to the metal hydrolase YfiT family. In terms of assembly, homodimer. Zn(2+) is required as a cofactor.

The protein resides in the cytoplasm. In terms of biological role, possible metal-dependent hydrolase. The chain is Putative metal-dependent hydrolase BT9727_2476 from Bacillus thuringiensis subsp. konkukian (strain 97-27).